We begin with the raw amino-acid sequence, 377 residues long: Guanine nucleotide exchange factor for Rab-3A (377 aa).

Residues 23–57 are disordered; that stretch reads WKNLGPSKGNRKSPGGLVEASASWEEAGGEEHPAA. Residues 77-128 are a coiled coil; the sequence is SEFLKEELYKAQKELKLKDEECERLCKVRAQLEQELEELTASLFEEAHKMVR. The disordered stretch occupies residues 167 to 198; the sequence is PASPNRELHPQLLSPTKAGPRKGHSRQKSTSS. Residues serine 169 and serine 180 each carry the phosphoserine modification.

It belongs to the SEC2 family. In terms of assembly, interacts with RAB3A and IHPK1 through the coiled-coil domain. This interaction is competitive. IHPK1 kinase activity is not required for this interaction. In terms of tissue distribution, selectively localized to the brain (at protein level).

Guanine nucleotide exchange factor (GEF) which may activate RAB3A, a GTPase that regulates synaptic vesicle exocytosis. Promotes the exchange of GDP to GTP, converting inactive GDP-bound Rab proteins into their active GTP-bound form. May also activate RAB8A and RAB8B. The polypeptide is Guanine nucleotide exchange factor for Rab-3A (Rab3il1) (Rattus norvegicus (Rat)).